We begin with the raw amino-acid sequence, 478 residues long: Cytochrome c-552 (478 aa).

The first 27 residues, 1-27, serve as a signal peptide directing secretion; sequence MKKQWTRRSAAAIAMVTTLLLSSHSFA. His91 contacts heme c. Residues Cys119, Cys122, and Lys123 each coordinate heme. Residues Cys157, Cys160, His161, Cys206, Cys209, and His210 each coordinate heme c. Ca(2+)-binding residues include Glu212, Tyr213, Lys258, and Gln260. Tyr213 lines the substrate pocket. Residue His261 coordinates substrate. Residues His272, Cys279, Cys282, His283, His298, Cys311, Cys314, His315, and His390 each coordinate heme c.

It belongs to the cytochrome c-552 family. The cofactor is Ca(2+). It depends on heme c as a cofactor.

The protein localises to the periplasm. It catalyses the reaction 6 Fe(III)-[cytochrome c] + NH4(+) + 2 H2O = 6 Fe(II)-[cytochrome c] + nitrite + 8 H(+). It participates in nitrogen metabolism; nitrate reduction (assimilation). Functionally, catalyzes the reduction of nitrite to ammonia, consuming six electrons in the process. The polypeptide is Cytochrome c-552 (Aliivibrio fischeri (strain ATCC 700601 / ES114) (Vibrio fischeri)).